The primary structure comprises 207 residues: Ribosomal RNA small subunit methyltransferase G (207 aa).

S-adenosyl-L-methionine is bound by residues Gly74, Leu79, 125-126 (VE), and Arg140.

This sequence belongs to the methyltransferase superfamily. RNA methyltransferase RsmG family.

It is found in the cytoplasm. It catalyses the reaction guanosine(527) in 16S rRNA + S-adenosyl-L-methionine = N(7)-methylguanosine(527) in 16S rRNA + S-adenosyl-L-homocysteine. Functionally, specifically methylates the N7 position of guanine in position 527 of 16S rRNA. In Shewanella piezotolerans (strain WP3 / JCM 13877), this protein is Ribosomal RNA small subunit methyltransferase G.